A 195-amino-acid polypeptide reads, in one-letter code: C2 domain-containing protein DDB_G0290753 (195 aa).

Positions 38–161 (KKLTKETKFE…NIKKYSYTFK (124 aa)) constitute a C2 domain. Positions 72, 78, 131, 133, and 139 each coordinate Ca(2+).

It depends on Ca(2+) as a cofactor.

This chain is C2 domain-containing protein DDB_G0290753, found in Dictyostelium discoideum (Social amoeba).